Here is a 184-residue protein sequence, read N- to C-terminus: Photosystem I assembly protein Ycf4 (184 aa).

A run of 2 helical transmembrane segments spans residues 21–43 and 58–80; these read NFFW…SSSY and VFIP…GFYL.

The protein belongs to the Ycf4 family.

The protein localises to the plastid. Its subcellular location is the chloroplast thylakoid membrane. Functionally, seems to be required for the assembly of the photosystem I complex. This is Photosystem I assembly protein Ycf4 from Psilotum nudum (Whisk fern).